A 227-amino-acid chain; its full sequence is Transmembrane emp24 domain-containing protein 4 (227 aa).

Positions 1–29 (MAGVGVGPLQGMVRFGLLVLTVCAACARG) are cleaved as a signal peptide. Over 30–194 (LYFHIGETEK…RLTSESTNQR (165 aa)) the chain is Lumenal. The 99-residue stretch at 39 to 137 (KRCFIEEIPD…KLRVHLDIQV (99 aa)) folds into the GOLD domain. N117 is a glycosylation site (N-linked (GlcNAc...) asparagine). Positions 147–176 (IAAKDKLTELQLRARQLLDQVEQIQKEQDY) form a coiled coil. Residues 195–212 (VLWWSIAQTVILILTGIW) traverse the membrane as a helical segment. The Cytoplasmic segment spans residues 213-227 (QMRHLKSFFEAKKLV). A COPII vesicle coat-binding motif is present at residues 220–221 (FF). A COPI vesicle coat-binding motif is present at residues 220–227 (FFEAKKLV).

This sequence belongs to the EMP24/GP25L family.

It localises to the endoplasmic reticulum membrane. In terms of biological role, involved in vesicular protein trafficking, mainly in the early secretory pathway. Involved in the maintenance of the Golgi apparatus. Appears to play a role in the biosynthesis of secreted cargo including processing. Involved in endoplasmic reticulum stress response. May play a role in the regulation of heat-shock response and apoptosis. The sequence is that of Transmembrane emp24 domain-containing protein 4 (Tmed4) from Mus musculus (Mouse).